The sequence spans 306 residues: Bacitracin transport ATP-binding protein BcrA (306 aa).

The 229-residue stretch at 5–233 (IKTTDLTKMY…NRKYLEFQLS (229 aa)) folds into the ABC transporter domain. Residue 37–44 (GRNGAGKT) participates in ATP binding.

It belongs to the ABC transporter superfamily.

Part of the binding-protein-dependent transport system for bacitracin that confer resistance to this antibiotic. Probably responsible for energy coupling to the transport system. The sequence is that of Bacitracin transport ATP-binding protein BcrA (bcrA) from Bacillus licheniformis.